We begin with the raw amino-acid sequence, 54 residues long: UPF0391 membrane protein Oant_1245 (54 aa).

2 helical membrane-spanning segments follow: residues 5-25 (ALVF…GIAG) and 29-48 (GIAQ…SLIA).

This sequence belongs to the UPF0391 family.

It is found in the cell membrane. The protein is UPF0391 membrane protein Oant_1245 of Brucella anthropi (strain ATCC 49188 / DSM 6882 / CCUG 24695 / JCM 21032 / LMG 3331 / NBRC 15819 / NCTC 12168 / Alc 37) (Ochrobactrum anthropi).